The primary structure comprises 344 residues: MASESAGPAELGFVEAAPSWRLRSEQFPSKVGGRPAWLSAAGLPGPPELACPLCGRPMAFLLQVYAPLPGRADAFHRCLFLFCCRTPPCCCGLRVFRNQLPRQNDFYSYEPPSEDPPSETGESVYLHLKSGAHLCRVCGCSGPKRCSRCHKAHYCSKEHQSLDWRLGHKQACAQTDNLDNIVPDHNFLFPEFEIVIETEDEIMPEVVERDDESEIIGTMGEAHEEELESMAKHESKEDRIFRKFKTKISLEPEQILRYGRGIAPLWISGENTPKEKDIPDCPCGAKRLFEFQVMPQLLNYLKADRLGRSVDWGVLAIFTCAESCKLGIGYTEEFVWKQDITDAA.

The Zn(2+) site is built by C135, C138, C146, C149, C155, H159, H168, and C172. Residues 135 to 172 (CRVCGCSGPKRCSRCHKAHYCSKEHQSLDWRLGHKQAC) form an MYND-type; atypical zinc finger.

In terms of processing, ubiquitinated by PRKN, promoting proteasomal degradation.

It localises to the nucleus. May be a DNA-binding protein with a regulatory function. May play an important role in cell death and/or in regulation of cell proliferation. The chain is Programmed cell death protein 2 (PDCD2) from Bos taurus (Bovine).